The chain runs to 465 residues: Asparagine--tRNA ligase (465 aa).

It belongs to the class-II aminoacyl-tRNA synthetase family. Homodimer.

It is found in the cytoplasm. The catalysed reaction is tRNA(Asn) + L-asparagine + ATP = L-asparaginyl-tRNA(Asn) + AMP + diphosphate + H(+). In Pseudoalteromonas translucida (strain TAC 125), this protein is Asparagine--tRNA ligase.